Here is a 441-residue protein sequence, read N- to C-terminus: Serine--tRNA ligase (441 aa).

Residue 250 to 252 (TSE) coordinates L-serine. ATP contacts are provided by residues 281–283 (RRE) and V297. E304 lines the L-serine pocket. 368 to 371 (EIVS) lines the ATP pocket. T402 contributes to the L-serine binding site.

The protein belongs to the class-II aminoacyl-tRNA synthetase family. Type-1 seryl-tRNA synthetase subfamily. Homodimer. The tRNA molecule binds across the dimer.

Its subcellular location is the cytoplasm. It catalyses the reaction tRNA(Ser) + L-serine + ATP = L-seryl-tRNA(Ser) + AMP + diphosphate + H(+). The catalysed reaction is tRNA(Sec) + L-serine + ATP = L-seryl-tRNA(Sec) + AMP + diphosphate + H(+). Its pathway is aminoacyl-tRNA biosynthesis; selenocysteinyl-tRNA(Sec) biosynthesis; L-seryl-tRNA(Sec) from L-serine and tRNA(Sec): step 1/1. In terms of biological role, catalyzes the attachment of serine to tRNA(Ser). Is also able to aminoacylate tRNA(Sec) with serine, to form the misacylated tRNA L-seryl-tRNA(Sec), which will be further converted into selenocysteinyl-tRNA(Sec). In Thermoplasma acidophilum (strain ATCC 25905 / DSM 1728 / JCM 9062 / NBRC 15155 / AMRC-C165), this protein is Serine--tRNA ligase.